The chain runs to 416 residues: MTDMRRLGQRAKQASLLIAPLSTQIKNRFLSTLAKALVDDTQTLLAANQKDLANAKEHGISDIMMDRLRLTSERIKAIAQGVQQVADLADPIGQVIKGYTNLDGLKILQKRVPLGVIAMIFESRPNVSVDAFSLAFKTNNAIILRGGKDALHSNKALVKLIRQSLEKSGITPDAVQLVEDPSHAVAEELMQATDYVDVLIPRGGAKLIQTVKEKAKVPVIETGVGNVHIYVDAQADLDMATNIVINAKTKRPSVCNAAEGLVIHEAVAARFIPMLEKAINQVQPVEWRADDKALPLFEQAVPAKAEDFETEFLDYIMSVKVVSSLEEAISWINQHTSHHSEAIITRDIKAAETFQDLVDAAAVYVNASTRFTDGFVFGLGAEIGISTQKMHARGPMGLEALTSTKFYINGDGHIRE.

This sequence belongs to the gamma-glutamyl phosphate reductase family.

The protein localises to the cytoplasm. The enzyme catalyses L-glutamate 5-semialdehyde + phosphate + NADP(+) = L-glutamyl 5-phosphate + NADPH + H(+). It functions in the pathway amino-acid biosynthesis; L-proline biosynthesis; L-glutamate 5-semialdehyde from L-glutamate: step 2/2. In terms of biological role, catalyzes the NADPH-dependent reduction of L-glutamate 5-phosphate into L-glutamate 5-semialdehyde and phosphate. The product spontaneously undergoes cyclization to form 1-pyrroline-5-carboxylate. This chain is Gamma-glutamyl phosphate reductase, found in Streptococcus pyogenes serotype M6 (strain ATCC BAA-946 / MGAS10394).